The following is a 412-amino-acid chain: 1-deoxy-D-xylulose 5-phosphate reductoisomerase (412 aa).

The NADPH site is built by T10, G11, S12, I13, G36, K37, N38, and N130. A 1-deoxy-D-xylulose 5-phosphate-binding site is contributed by K131. E132 provides a ligand contact to NADPH. D156 provides a ligand contact to Mn(2+). Residues S157, E158, S194, and H217 each coordinate 1-deoxy-D-xylulose 5-phosphate. Position 158 (E158) interacts with Mn(2+). Position 223 (G223) interacts with NADPH. 1-deoxy-D-xylulose 5-phosphate is bound by residues S230, N235, K236, and E239. E239 contacts Mn(2+).

The protein belongs to the DXR family. Mg(2+) serves as cofactor. Mn(2+) is required as a cofactor.

The catalysed reaction is 2-C-methyl-D-erythritol 4-phosphate + NADP(+) = 1-deoxy-D-xylulose 5-phosphate + NADPH + H(+). It functions in the pathway isoprenoid biosynthesis; isopentenyl diphosphate biosynthesis via DXP pathway; isopentenyl diphosphate from 1-deoxy-D-xylulose 5-phosphate: step 1/6. Its function is as follows. Catalyzes the NADPH-dependent rearrangement and reduction of 1-deoxy-D-xylulose-5-phosphate (DXP) to 2-C-methyl-D-erythritol 4-phosphate (MEP). The polypeptide is 1-deoxy-D-xylulose 5-phosphate reductoisomerase (Prochlorococcus marinus (strain NATL1A)).